The chain runs to 66 residues: Beta-toxin Cbo3 (66 aa).

In terms of domain architecture, LCN-type CS-alpha/beta spans 1 to 66 (KEGYIVNYHD…VWPLPKKTCN (66 aa)). Disulfide bonds link Cys-12/Cys-65, Cys-16/Cys-41, Cys-25/Cys-46, and Cys-29/Cys-48. At Asn-66 the chain carries Asparagine amide.

Belongs to the long (4 C-C) scorpion toxin superfamily. Sodium channel inhibitor family. Beta subfamily. In terms of tissue distribution, expressed by the venom gland.

Its subcellular location is the secreted. Functionally, beta toxins bind voltage-independently at site-4 of sodium channels and shift the voltage of activation toward more negative potentials thereby affecting sodium channel activation and promoting spontaneous and repetitive firing. A mixture of Cbo2 and Cbo3 is weakly active on the human voltage-gated sodium channels Nav1.4/SCN4A and Nav1.6/SCN8A when tested at 200 nM. In vivo, is toxic to mice when intraperitoneally injected. This is Beta-toxin Cbo3 from Centruroides bonito (Scorpion).